Consider the following 60-residue polypeptide: Small ribosomal subunit protein bS21 (60 aa).

The interval K38–Y60 is disordered.

It belongs to the bacterial ribosomal protein bS21 family.

The protein is Small ribosomal subunit protein bS21 of Mycoplasmoides gallisepticum (strain R(low / passage 15 / clone 2)) (Mycoplasma gallisepticum).